Reading from the N-terminus, the 520-residue chain is AAA-ATPase At5g57480 (520 aa).

An N-terminal signal peptide occupies residues 1–24 (MKEYWTSLASLLGVLAFCQSLMQS). 244-251 (GPPGTGKS) contributes to the ATP binding site. Disordered regions lie at residues 307–340 (KKNS…EEGG) and 467–520 (NVKD…TRED). Residues 328-340 (SGSGSGGSGEEGG) show a composition bias toward gly residues. A compositionally biased stretch (acidic residues) spans 497–512 (QNEDEDHDEEEIELED).

The protein belongs to the AAA ATPase family. BCS1 subfamily. Mg(2+) serves as cofactor.

The catalysed reaction is ATP + H2O = ADP + phosphate + H(+). The sequence is that of AAA-ATPase At5g57480 from Arabidopsis thaliana (Mouse-ear cress).